The primary structure comprises 402 residues: tRNA pseudouridine synthase Pus10 (402 aa).

The region spanning Arg-37–Pro-159 is the THUMP domain. The Nucleophile role is filled by Asp-228. Substrate contacts are provided by Tyr-296 and Tyr-364.

The protein belongs to the pseudouridine synthase Pus10 family.

It carries out the reaction uridine(54) in tRNA = pseudouridine(54) in tRNA. The enzyme catalyses uridine(55) in tRNA = pseudouridine(55) in tRNA. Responsible for synthesis of pseudouridine from uracil-54 and uracil-55 in the psi GC loop of transfer RNAs. This Methanothermobacter marburgensis (strain ATCC BAA-927 / DSM 2133 / JCM 14651 / NBRC 100331 / OCM 82 / Marburg) (Methanobacterium thermoautotrophicum) protein is tRNA pseudouridine synthase Pus10.